Reading from the N-terminus, the 407-residue chain is Lymphocyte transmembrane adapter 1 (407 aa).

A disordered region spans residues methionine 1 to glycine 25. The Extracellular portion of the chain corresponds to methionine 1 to glutamine 33. Residues glutamate 16–glycine 25 show a composition bias toward polar residues. Residues isoleucine 34–isoleucine 54 traverse the membrane as a helical; Signal-anchor for type III membrane protein segment. Topologically, residues leucine 55–alanine 407 are cytoplasmic. Residues glutamate 109 to glutamine 131 form a disordered region. A phosphotyrosine mark is found at tyrosine 185, tyrosine 260, tyrosine 286, and tyrosine 353. Residues serine 331–leucine 388 form a disordered region.

In terms of assembly, when phosphorylated, interacts with GRB2, PIK3R1 and GRAP2. In terms of processing, phosphorylated on tyrosines upon TCR or BCR activation; which leads to the recruitment of GRB2, PIK3R1 and GRAP2. As to expression, expressed in T-cells and B-cells.

The protein localises to the cell membrane. Functionally, negatively regulates TCR (T-cell antigen receptor)-mediated signaling in T-cells and BCR (B-cell antigen receptor)-mediated signaling in B-cells. The sequence is that of Lymphocyte transmembrane adapter 1 (Lax1) from Mus musculus (Mouse).